Here is a 571-residue protein sequence, read N- to C-terminus: uncharacterized protein (571 aa).

A disordered region spans residues 1–25 (MAPSVATSLKAEILPSPRTSSPSSN). The 255-residue stretch at 135 to 389 (FSVFPAPILD…RGLHKNAFAT (255 aa)) folds into the FAD-binding FR-type domain. Positions 447 to 479 (NPLQKSSDDDASSTVSQQTETEMDSFEVKKDGT) are disordered.

This sequence belongs to the flavoprotein pyridine nucleotide cytochrome reductase family. FAD serves as cofactor.

This is an uncharacterized protein from Schizosaccharomyces pombe (strain 972 / ATCC 24843) (Fission yeast).